Reading from the N-terminus, the 1235-residue chain is MSLNIPPKPEESLWTDDQWKAIQAKGNNVLVAAAAGSGKTAVLVTRIIKKLIDESANLNVDELLIVTFTNASAAEMKFRIGKGLEEALGQNPDSAHLKRQVALLNYASISTLHSFCLEIIRKYYFEADIDPSFRLIEPIESSMIRDEVLEGLLEQEYGIENNEAFFHLVESFTGDRSDAELHSLISKLYDFSRANPDPNAWLEAMVNFYNTEEITSITELPYFPIIKEDIELRVNQAKNYLLNAIDYANENNGPAPYLATLENDLVQIQALSELNWSSWTHLKTSIENIDFKRIPTLKNKSDYDEVYVEEAKKFRDAAKKEMKNIATDWFSREEVNYLSDLEKMKPDIQTLSELVKKFAANFFEEKQQRGVLDFNDLEHLALKILLNGDKASEVAQNYQKQFKEVLIDEYQDTNMVQETILRLVTNPSEAQGNLFMVGDVKQSIYRFRLAEPTLFMTKYQTFQQDGSGNGIRIDLSQNFRSRKEVLDATNFIFRQLMDKHIAEIDYDTAAELTLGAKSPETNAMATELLLIDMKTEDTETEDELSPQELQKNQVESRTIAMKIREMIDNKFPIYDKKLKQNRPIQYRDIVILSRAMTSAPDMEEAMKVQDIPFYANNNSGYFETTEVATMIALMKVVDNPYQDIPLAAVLRSPIIGLNEEELGQIRMAKKKGYFYDALLAYKDITVSETADKISDFVQQLNNWRELSIRENLTSLIWQIYQETNFYEFVGGLPGGKQRQANLRALYDRANQYEKTSFRGLFRFVRFVERLEIRGDDLGTAKTLGEKEDVVRMMTIHASKGLEFPVVIVSGLSRKFNMRDIYSKTLLDKDYGFASSYRDVEKMIVYPTIMQQAIKQKKSREMIAEEMRVLYVALTRAEEKLILVATVPDFEKTSKNWLQVAKEKETILPAATRAKAKCYLDWIGNATIRHSAFKELLCEEMIQTLATEMKLQIEIKTKEMFLTNELERAESDNWLENIKEHQPVPIQSPYKDEIQRYMEYEYQNEAATEIRAKQSVTELKRQFSLQDNWSDTTLLKEFQKVSLDRPKFLQKNKLSATEIGTAMHTLMQAVSLDYKPTKEDLEQLLRTMREKDILTDAQIKAINIKQILDFFESPLGETMLQKKDLVKREVPFSYLLPVSELYENVDIDERVLIQGVVDSMIEEEETITLIDYKTDKIEGRYADWNAAEKVMKERYHIQIKLYAEAIQAISGKKVAAAYLYFFDGQHICQINTKEGL.

Residues S12–R482 enclose the UvrD-like helicase ATP-binding domain. ATP is bound at residue A33–T40. One can recognise a UvrD-like helicase C-terminal domain in the interval A509 to G800.

Belongs to the helicase family. AddA subfamily. In terms of assembly, heterodimer of AddA and AddB/RexB. The cofactor is Mg(2+).

The enzyme catalyses Couples ATP hydrolysis with the unwinding of duplex DNA by translocating in the 3'-5' direction.. It catalyses the reaction ATP + H2O = ADP + phosphate + H(+). The heterodimer acts as both an ATP-dependent DNA helicase and an ATP-dependent, dual-direction single-stranded exonuclease. Recognizes the chi site generating a DNA molecule suitable for the initiation of homologous recombination. The AddA nuclease domain is required for chi fragment generation; this subunit has the helicase and 3' -&gt; 5' nuclease activities. The protein is ATP-dependent helicase/nuclease subunit A of Listeria monocytogenes serotype 4a (strain HCC23).